Here is a 947-residue protein sequence, read N- to C-terminus: DNA topoisomerase 1 (947 aa).

Residues 16-140 (RRLVIVESPT…VKRMVFHEIT (125 aa)) form the Toprim domain. Positions 22 and 109 each coordinate Mg(2+). In terms of domain architecture, Topo IA-type catalytic spans 155–614 (DIDLVDAQET…FYFGGNHGVS (460 aa)). Positions 189 to 194 (SAGRVQ) are interaction with DNA. The active-site O-(5'-phospho-DNA)-tyrosine intermediate is the Tyr343. Disordered regions lie at residues 733 to 771 (VLPKHDDDYGAADQGTKKTKKGRRASASQGPKPRTGSLL), 846 to 888 (KRAG…GETN), and 910 to 947 (ADRRARGPVKRPAKKARKVPAKKAARLAPARGISQSPR). Positions 915–934 (RGPVKRPAKKARKVPAKKAA) are enriched in basic residues.

The protein belongs to the type IA topoisomerase family. In terms of assembly, monomer. Requires Mg(2+) as cofactor.

It carries out the reaction ATP-independent breakage of single-stranded DNA, followed by passage and rejoining.. Functionally, releases the supercoiling and torsional tension of DNA, which is introduced during the DNA replication and transcription, by transiently cleaving and rejoining one strand of the DNA duplex. Introduces a single-strand break via transesterification at a target site in duplex DNA. The scissile phosphodiester is attacked by the catalytic tyrosine of the enzyme, resulting in the formation of a DNA-(5'-phosphotyrosyl)-enzyme intermediate and the expulsion of a 3'-OH DNA strand. The free DNA strand then undergoes passage around the unbroken strand, thus removing DNA supercoils. Finally, in the religation step, the DNA 3'-OH attacks the covalent intermediate to expel the active-site tyrosine and restore the DNA phosphodiester backbone. In Mycobacterium leprae (strain TN), this protein is DNA topoisomerase 1.